The sequence spans 112 residues: Putative pterin-4-alpha-carbinolamine dehydratase (112 aa).

Belongs to the pterin-4-alpha-carbinolamine dehydratase family.

The catalysed reaction is (4aS,6R)-4a-hydroxy-L-erythro-5,6,7,8-tetrahydrobiopterin = (6R)-L-erythro-6,7-dihydrobiopterin + H2O. This chain is Putative pterin-4-alpha-carbinolamine dehydratase, found in Shewanella sp. (strain MR-7).